Consider the following 259-residue polypeptide: Probable metal transport system ATP-binding protein CT_068 (259 aa).

The ABC transporter domain maps to 9 to 241; that stretch reads WSVEDLCVNY…AIFQAYGCEL (233 aa). 41 to 48 provides a ligand contact to ATP; that stretch reads GPNGAGKS.

Belongs to the ABC transporter superfamily.

It localises to the cell inner membrane. Part of an ATP-driven transport system CT_067/CT_068/CT_069/CT_070 for a metal. Probably responsible for energy coupling to the transport system. The chain is Probable metal transport system ATP-binding protein CT_068 from Chlamydia trachomatis serovar D (strain ATCC VR-885 / DSM 19411 / UW-3/Cx).